The chain runs to 173 residues: MSIILGIDPGSRITGYGVIRQVGRQLTYLGSGCIRTKVDDLPSRLKLIYAGVTEIITQFQPDYFAIEQVFMAKNADSALKLGQARGVAIVAAVNQELPVFEYAARQVKQTVVGIGSAEKSQVQHMVRTLLKLPANPQADAADALAIAITHCHVSQNAMQMSESRLNLARGRLR.

Residues D8, E67, and D139 contribute to the active site. Mg(2+)-binding residues include D8, E67, and D139.

It belongs to the RuvC family. Homodimer which binds Holliday junction (HJ) DNA. The HJ becomes 2-fold symmetrical on binding to RuvC with unstacked arms; it has a different conformation from HJ DNA in complex with RuvA. In the full resolvosome a probable DNA-RuvA(4)-RuvB(12)-RuvC(2) complex forms which resolves the HJ. The cofactor is Mg(2+).

The protein resides in the cytoplasm. It catalyses the reaction Endonucleolytic cleavage at a junction such as a reciprocal single-stranded crossover between two homologous DNA duplexes (Holliday junction).. The RuvA-RuvB-RuvC complex processes Holliday junction (HJ) DNA during genetic recombination and DNA repair. Endonuclease that resolves HJ intermediates. Cleaves cruciform DNA by making single-stranded nicks across the HJ at symmetrical positions within the homologous arms, yielding a 5'-phosphate and a 3'-hydroxyl group; requires a central core of homology in the junction. The consensus cleavage sequence is 5'-(A/T)TT(C/G)-3'. Cleavage occurs on the 3'-side of the TT dinucleotide at the point of strand exchange. HJ branch migration catalyzed by RuvA-RuvB allows RuvC to scan DNA until it finds its consensus sequence, where it cleaves and resolves the cruciform DNA. The chain is Crossover junction endodeoxyribonuclease RuvC from Salmonella agona (strain SL483).